Consider the following 87-residue polypeptide: Dynein light chain 1, cytoplasmic (87 aa).

This sequence belongs to the dynein light chain family. Homodimer. Cytoplasmic dynein consists of two catalytic heavy chains (HCs) and a number of non-catalytic subunits which present intermediate chains (ICs), light intermediate chains (LICs) and light chains (LCs). Component of the nuclear pore complex (NPC). NPC constitutes the exclusive means of nucleocytoplasmic transport. NPCs allow the passive diffusion of ions and small molecules and the active, nuclear transport receptor-mediated bidirectional transport of macromolecules such as proteins, RNAs, ribonucleoparticles (RNPs), and ribosomal subunits across the nuclear envelope. Due to its 8-fold rotational symmetry, all subunits are present with 8 copies or multiples thereof.

It localises to the cytoplasm. The protein localises to the cytoskeleton. Its subcellular location is the nucleus. The protein resides in the nuclear pore complex. Functionally, acts as one of several non-catalytic accessory components of the cytoplasmic dynein complex that are thought to be involved in linking dynein to cargos and to adapter proteins that regulate dynein function. Cytoplasmic dynein 1 acts as a motor for the intracellular retrograde motility of vesicles and organelles along microtubules. May play a role in changing or maintaining the spatial distribution of cytoskeletal structures. Also a component of the nuclear pore complex. The polypeptide is Dynein light chain 1, cytoplasmic (DYN2) (Kluyveromyces lactis (strain ATCC 8585 / CBS 2359 / DSM 70799 / NBRC 1267 / NRRL Y-1140 / WM37) (Yeast)).